Here is a 169-residue protein sequence, read N- to C-terminus: Short form salivary protein D7R3 (169 aa).

The signal sequence occupies residues 1–21; the sequence is MFGKLLPCAILVWCLFSLGQA. 3 disulfide bridges follow: C30–C62, C43–C168, and C101–C120. Positions 31 and 46 each coordinate noradrenaline. E31 contacts serotonin. Residues H59, Y118, D135, and E138 each coordinate serotonin. Positions 118, 135, and 138 each coordinate histamine. Noradrenaline-binding residues include D135 and E138.

This sequence belongs to the PBP/GOBP family. As to expression, female saliva (at protein level). Female salivary gland. Low-level expression in female carcass without salivary glands. Not detected in male tissues.

The protein resides in the secreted. Functionally, modulates blood feeding of female mosquitoes on vertebrate species by binding and sequestering different mediators involved in the host response. Binds serotonin, noradrenaline, histamine and adrenaline. Inhibits histamine-, serotonin- and noradrenaline-induced smooth muscle contraction. Exhibits vasodilating activity. In Anopheles gambiae (African malaria mosquito), this protein is Short form salivary protein D7R3.